We begin with the raw amino-acid sequence, 380 residues long: Phospho-N-acetylmuramoyl-pentapeptide-transferase (380 aa).

The next 9 helical transmembrane spans lie at Arg-25 to Ile-45, Thr-70 to Trp-90, Val-98 to Leu-118, Val-142 to Gly-162, Val-173 to Ile-193, Gly-209 to Leu-229, Gly-245 to Trp-265, Gln-272 to Leu-294, and Gln-357 to Leu-377.

The protein belongs to the glycosyltransferase 4 family. MraY subfamily. Requires Mg(2+) as cofactor.

It localises to the cell inner membrane. It catalyses the reaction UDP-N-acetyl-alpha-D-muramoyl-L-alanyl-gamma-D-glutamyl-meso-2,6-diaminopimeloyl-D-alanyl-D-alanine + di-trans,octa-cis-undecaprenyl phosphate = di-trans,octa-cis-undecaprenyl diphospho-N-acetyl-alpha-D-muramoyl-L-alanyl-D-glutamyl-meso-2,6-diaminopimeloyl-D-alanyl-D-alanine + UMP. It participates in cell wall biogenesis; peptidoglycan biosynthesis. In terms of biological role, catalyzes the initial step of the lipid cycle reactions in the biosynthesis of the cell wall peptidoglycan: transfers peptidoglycan precursor phospho-MurNAc-pentapeptide from UDP-MurNAc-pentapeptide onto the lipid carrier undecaprenyl phosphate, yielding undecaprenyl-pyrophosphoryl-MurNAc-pentapeptide, known as lipid I. The sequence is that of Phospho-N-acetylmuramoyl-pentapeptide-transferase from Gemmatimonas aurantiaca (strain DSM 14586 / JCM 11422 / NBRC 100505 / T-27).